Reading from the N-terminus, the 332-residue chain is L-lactate dehydrogenase A chain (332 aa).

Ala2 bears the N-acetylalanine mark. N6-acetyllysine; alternate is present on Lys5. The residue at position 5 (Lys5) is an N6-succinyllysine; alternate. The residue at position 14 (Lys14) is an N6-acetyllysine. Residue 29 to 57 coordinates NAD(+); it reads GAVGMACAISILMKDLADEVALVDVMEDK. Lys57 carries the N6-acetyllysine; alternate modification. Lys57 participates in a covalent cross-link: Glycyl lysine isopeptide (Lys-Gly) (interchain with G-Cter in SUMO2); alternate. Lys81 is subject to N6-acetyllysine. Substrate is bound at residue Arg106. Residue Lys118 is modified to N6-acetyllysine; alternate. Lys118 carries the N6-succinyllysine; alternate modification. Lys126 carries the post-translational modification N6-acetyllysine. NAD(+) is bound at residue Asn138. Positions 138 and 169 each coordinate substrate. His193 serves as the catalytic Proton acceptor. Lys224 and Lys232 each carry N6-acetyllysine. Tyr239 carries the post-translational modification Phosphotyrosine. Lys243 carries the N6-acetyllysine modification. Substrate is bound at residue Thr248. Thr309 is modified (phosphothreonine). Lys318 carries the post-translational modification N6-acetyllysine; alternate. Lys318 carries the N6-succinyllysine; alternate modification. The residue at position 322 (Thr322) is a Phosphothreonine.

This sequence belongs to the LDH/MDH superfamily. LDH family. In terms of assembly, homotetramer. Interacts with PTEN upstream reading frame protein MP31. Post-translationally, ISGylated.

It localises to the cytoplasm. The catalysed reaction is (S)-lactate + NAD(+) = pyruvate + NADH + H(+). It participates in fermentation; pyruvate fermentation to lactate; (S)-lactate from pyruvate: step 1/1. Its function is as follows. Interconverts simultaneously and stereospecifically pyruvate and lactate with concomitant interconversion of NADH and NAD(+). The sequence is that of L-lactate dehydrogenase A chain (LDHA) from Bos mutus grunniens (Wild yak).